The sequence spans 160 residues: MSQLKVVYPGTFDPITRGHEDIVRRAAGLFDHVVVAVAKSPGKHPMFTLDERVDLASSILSDCPNVEVLGFSGLLMHFVREQGARAVVRGLRAVSDFEYEFQLAGMNRQLFPEMETIFLTPAEQHMFVSASLVREIAQLKGDISQFVSPLVQERITLKLA.

Thr11 contacts substrate. Residues 11–12 (TF) and His19 each bind ATP. Positions 43, 75, and 89 each coordinate substrate. Residues 90 to 92 (GLR), Glu100, and 125 to 131 (HMFVSAS) each bind ATP.

The protein belongs to the bacterial CoaD family. Homohexamer. Requires Mg(2+) as cofactor.

The protein resides in the cytoplasm. It carries out the reaction (R)-4'-phosphopantetheine + ATP + H(+) = 3'-dephospho-CoA + diphosphate. It functions in the pathway cofactor biosynthesis; coenzyme A biosynthesis; CoA from (R)-pantothenate: step 4/5. Functionally, reversibly transfers an adenylyl group from ATP to 4'-phosphopantetheine, yielding dephospho-CoA (dPCoA) and pyrophosphate. The chain is Phosphopantetheine adenylyltransferase from Methylobacillus flagellatus (strain ATCC 51484 / DSM 6875 / VKM B-1610 / KT).